Consider the following 416-residue polypeptide: Serine hydroxymethyltransferase 1 (416 aa).

(6S)-5,6,7,8-tetrahydrofolate-binding positions include leucine 121 and 125–127 (GHL). N6-(pyridoxal phosphate)lysine is present on lysine 229. Residues glutamate 245 and 354–356 (SPF) contribute to the (6S)-5,6,7,8-tetrahydrofolate site.

It belongs to the SHMT family. As to quaternary structure, homodimer. The cofactor is pyridoxal 5'-phosphate.

It is found in the cytoplasm. The enzyme catalyses (6R)-5,10-methylene-5,6,7,8-tetrahydrofolate + glycine + H2O = (6S)-5,6,7,8-tetrahydrofolate + L-serine. It functions in the pathway one-carbon metabolism; tetrahydrofolate interconversion. Its pathway is amino-acid biosynthesis; glycine biosynthesis; glycine from L-serine: step 1/1. Its function is as follows. Catalyzes the reversible interconversion of serine and glycine with tetrahydrofolate (THF) serving as the one-carbon carrier. This reaction serves as the major source of one-carbon groups required for the biosynthesis of purines, thymidylate, methionine, and other important biomolecules. Also exhibits THF-independent aldolase activity toward beta-hydroxyamino acids, producing glycine and aldehydes, via a retro-aldol mechanism. This chain is Serine hydroxymethyltransferase 1, found in Vibrio cholerae serotype O1 (strain ATCC 39315 / El Tor Inaba N16961).